The primary structure comprises 373 residues: MASKPEKRVASSVFITLAPPRRDVAVAEEVRQAVCEARRGRPWEAPAPMKTPEAGLAGRPSPWTTPGRAAATVPAAPMQLFNGGCPPPPPVLDGEDVLPDLDLLPPPPPPPPVLLPSEEEAPAPMGASLIADLEQLHLSPPPPPPQAPAEGPSVQPGPLRPMEEELPPPPAEPVEKGASTDICAFCHKTVSPRELAVEAMKRQYHAQCFTCRTCRRQLAGQSFYQKDGRPLCEPCYQDTLERCGKCGEVVRDHIIRALGQAFHPSCFTCVTCARCIGDESFALGSQNEVYCLDDFYRKFAPVCSICENPIIPRDGKDAFKIECMGRNFHENCYRCEDCRILLSVEPTDQGCYPLNNHLFCKPCHVKRSAAGCC.

A filamin-binding region spans residues 1–70 (MASKPEKRVA…SPWTTPGRAA (70 aa)). Disordered regions lie at residues 41–119 (RPWE…PSEE) and 135–176 (QLHL…PVEK). Residues 104 to 114 (LPPPPPPPPVL) are compositionally biased toward pro residues. LIM zinc-binding domains lie at 181-242 (DICA…TLER), 243-300 (CGKC…RKFA), and 301-370 (PVCS…RSAA). Positions 276 to 373 (IGDESFALGS…HVKRSAAGCC (98 aa)) are FERMT2-binding.

In terms of assembly, interacts with NKX2-5. Isoform 1 and isoform 3 interact with FERMT2, FLNA, FLNB and FLNC. Isoform 2 interacts with FLNB. Isoform 1 and isoform 3 are expressed in heart, kidney, lung, pancreas, placenta and platelets. Isoform 2 is expressed in brain, heart, kidney, lung, pancreas, placenta, skeletal muscle and platelets.

Its subcellular location is the cell junction. The protein localises to the focal adhesion. It is found in the cytoplasm. It localises to the cytoskeleton. The protein resides in the stress fiber. In terms of biological role, serves as an anchoring site for cell-ECM adhesion proteins and filamin-containing actin filaments. Is implicated in cell shape modulation (spreading) and motility. May participate in the regulation of filamin-mediated cross-linking and stabilization of actin filaments. May also regulate the assembly of filamin-containing signaling complexes that control actin assembly. Promotes dissociation of FLNA from ITGB3 and ITGB7. Promotes activation of integrins and regulates integrin-mediated cell-cell adhesion. The protein is Filamin-binding LIM protein 1 (FBLIM1) of Homo sapiens (Human).